Here is a 39-residue protein sequence, read N- to C-terminus: Photosystem II reaction center protein L (39 aa).

Residues 18 to 38 (SLYLGLLLIAVLGILFSSYFF) traverse the membrane as a helical segment.

This sequence belongs to the PsbL family. As to quaternary structure, PSII is composed of 1 copy each of membrane proteins PsbA, PsbB, PsbC, PsbD, PsbE, PsbF, PsbH, PsbI, PsbJ, PsbK, PsbL, PsbM, PsbT, PsbX, PsbY, PsbZ, Psb30/Ycf12, peripheral proteins PsbO, CyanoQ (PsbQ), PsbU, PsbV and a large number of cofactors. It forms dimeric complexes.

The protein localises to the cellular thylakoid membrane. Its function is as follows. One of the components of the core complex of photosystem II (PSII). PSII is a light-driven water:plastoquinone oxidoreductase that uses light energy to abstract electrons from H(2)O, generating O(2) and a proton gradient subsequently used for ATP formation. It consists of a core antenna complex that captures photons, and an electron transfer chain that converts photonic excitation into a charge separation. This subunit is found at the monomer-monomer interface and is required for correct PSII assembly and/or dimerization. The protein is Photosystem II reaction center protein L of Picosynechococcus sp. (strain ATCC 27264 / PCC 7002 / PR-6) (Agmenellum quadruplicatum).